We begin with the raw amino-acid sequence, 976 residues long: Synaptonemal complex protein 1 (976 aa).

The Mediates head to head self-assembly of N-terminal ends signature appears at 101–111; it reads GLSRVYSKLYK. A Nuclear localization signal motif is present at residues 117–120; it reads KKWK. The tract at residues 206–362 is interaction with SYCE3; sequence ETRQVYMDLN…CQLTEEKETQ (157 aa). Coiled coils occupy residues 211–316, 391–439, 499–685, and 739–798; these read YMDL…SIEK, LRTE…LKKV, VKDL…VEKA, and EQEQ…KTQT. The required for pH-induced assembly of C-terminal ends into antiparallel tetramers stretch occupies residues 676–770; that stretch reads ENLLEEVEKA…LSVKKQLEIE (95 aa). The short motif at 679-682 is the Nuclear localization signal element; that stretch reads LEEV. The tract at residues 784–976 is DNA-binding; sequence NTATLKEKKD…KLKEAEKLFV (193 aa). Positions 880–883 match the Nuclear localization signal motif; the sequence is KKRK.

In terms of assembly, structural component of synaptonemal complexes. Homotetramer that consists of an N-terminal four-helical bundle that bifurcates into two elongated C-terminal dimeric coiled coils. This tetrameric building block potentially self-assembles into a supramolecular zipper-like lattice to mediate meiotic chromosome synapsis. Self-assembly is likely initiated by local proton density at chromosome axis, which is predicted to trigger antiparallel back to back assembly of adjacent C-terminal ends into tetrameric structures that anchor to chromosomal DNA. Then the N-terminal ends are predicted to undergo cooperative antiparallel head to head assembly at the midline of synaptonemal complexes central element to form a zipper-like lattice between properly aligned homologous chromosomes. The nascent synapsis generated by SYCP1 is stabilized through interaction with central element proteins SYCE1 and SYCE2. Interacts (via tetrameric core) with SYCE3; the interaction remodels SYCP1 homotetramers to 2:1 heterotrimers with SYCE3. SYCP1/SYCE3 heterotrimers form lattice assemblies as part of the mature synaptonemal complex via both lateral and head-to-head interactions. Forms a complex with EWSR1, PRDM9, SYCP3 and REC8; complex formation is dependent of phosphorylated form of REC8 and requires PRDM9 bound to hotspot DNA; EWSR1 joins PRDM9 with the chromosomal axis through REC8. Interacts with SPO16. As to expression, testis.

The protein resides in the nucleus. Its subcellular location is the chromosome. It is found in the centromere. Functionally, major component of the transverse filaments of synaptonemal complexes, formed between homologous chromosomes during meiotic prophase. Required for normal assembly of the central element of the synaptonemal complexes. Required for normal centromere pairing during meiosis. Required for normal meiotic chromosome synapsis during oocyte and spermatocyte development and for normal male and female fertility. The chain is Synaptonemal complex protein 1 from Homo sapiens (Human).